The primary structure comprises 504 residues: MMTISLIWGIAMVVCCCIWVIFDRRRRKAGEPPLENGLIPYLGCALKFGSNPLEFLRANQRKHGHVFTCKLMGKYVHFITNSLSYHKVLCHGKYFDWKKFHYTTSAKAFGHRSIDPNDGNTTENINNTFTKTLQGDALHSLSEAMMQNLQFVLRPPDLPKSKSDAWVTEGMYAFCYRVMFEAGYLTLFGRDTSKPDTQRVLILNNLNSFKQFDQVFPALVAGLPIHLFKAAHKAREQLAEGLKHENLSVRDQVSELIRLRMFLNDTLSTFDDMEKAKTHLAILWASQANTIPATFWSLFQMIRSPDALRAASEEVNGALQSAGQKLSSEGNAIYLDQIQLNNLPVLDSIIKEALRLSSASLNIRTAKEDFTLHLEDGSYNIRKDDIIALYPQLMHLDPAIYPDPLTFKYDRYLDENKKAKTSFYSNGNKLKYFYMPFGSGATICPGRLFAVQEIKQFLILMLSYFELELVESHVKCPPLDQSRAGLGILPPLNDIEFKYKLKHL.

C444 contacts heme.

This sequence belongs to the cytochrome P450 family. Heme serves as cofactor.

Its subcellular location is the endoplasmic reticulum membrane. The protein resides in the microsome membrane. The enzyme catalyses cholesterol + reduced [NADPH--hemoprotein reductase] + O2 = 7alpha-hydroxycholesterol + oxidized [NADPH--hemoprotein reductase] + H2O + H(+). It participates in lipid metabolism; bile acid biosynthesis. Catalyzes a rate-limiting step in cholesterol catabolism and bile acid biosynthesis by introducing a hydrophilic moiety at position 7 of cholesterol. Important for cholesterol homeostasis. The protein is Cholesterol 7-alpha-monooxygenase (CYP7A1) of Cricetulus griseus (Chinese hamster).